The primary structure comprises 347 residues: Methionine import ATP-binding protein MetN (347 aa).

An ABC transporter domain is found at 2-241 (IKLEGVSKTY…PATRLGRDFL (240 aa)). 38–45 (GLSGAGKS) lines the ATP pocket.

Belongs to the ABC transporter superfamily. Methionine importer (TC 3.A.1.24) family. In terms of assembly, the complex is composed of two ATP-binding proteins (MetN), two transmembrane proteins (MetI) and a solute-binding protein (MetQ).

The protein resides in the cell inner membrane. The enzyme catalyses L-methionine(out) + ATP + H2O = L-methionine(in) + ADP + phosphate + H(+). It catalyses the reaction D-methionine(out) + ATP + H2O = D-methionine(in) + ADP + phosphate + H(+). In terms of biological role, part of the ABC transporter complex MetNIQ involved in methionine import. Responsible for energy coupling to the transport system. The sequence is that of Methionine import ATP-binding protein MetN from Chromohalobacter salexigens (strain ATCC BAA-138 / DSM 3043 / CIP 106854 / NCIMB 13768 / 1H11).